The sequence spans 232 residues: Large ribosomal subunit protein uL1 (232 aa).

It belongs to the universal ribosomal protein uL1 family. As to quaternary structure, part of the 50S ribosomal subunit.

In terms of biological role, binds directly to 23S rRNA. The L1 stalk is quite mobile in the ribosome, and is involved in E site tRNA release. Protein L1 is also a translational repressor protein, it controls the translation of the L11 operon by binding to its mRNA. The polypeptide is Large ribosomal subunit protein uL1 (Liberibacter asiaticus (Citrus greening disease)).